The sequence spans 338 residues: Holliday junction branch migration complex subunit RuvB (338 aa).

The tract at residues 1–180 (MTRLVTPDIT…FGVISRLEFY (180 aa)) is large ATPase domain (RuvB-L). ATP-binding positions include L19, R20, G61, K64, T65, T66, 127–129 (EDY), R170, Y180, and R217. A Mg(2+)-binding site is contributed by T65. A small ATPAse domain (RuvB-S) region spans residues 181–251 (TDDELTTIVT…VVDESLKLLE (71 aa)). Residues 254–338 (EKGFDHMDRT…PPSSSQGNLF (85 aa)) form a head domain (RuvB-H) region. Residues R290, R309, and R314 each coordinate DNA.

The protein belongs to the RuvB family. In terms of assembly, homohexamer. Forms an RuvA(8)-RuvB(12)-Holliday junction (HJ) complex. HJ DNA is sandwiched between 2 RuvA tetramers; dsDNA enters through RuvA and exits via RuvB. An RuvB hexamer assembles on each DNA strand where it exits the tetramer. Each RuvB hexamer is contacted by two RuvA subunits (via domain III) on 2 adjacent RuvB subunits; this complex drives branch migration. In the full resolvosome a probable DNA-RuvA(4)-RuvB(12)-RuvC(2) complex forms which resolves the HJ.

Its subcellular location is the cytoplasm. It carries out the reaction ATP + H2O = ADP + phosphate + H(+). Functionally, the RuvA-RuvB-RuvC complex processes Holliday junction (HJ) DNA during genetic recombination and DNA repair, while the RuvA-RuvB complex plays an important role in the rescue of blocked DNA replication forks via replication fork reversal (RFR). RuvA specifically binds to HJ cruciform DNA, conferring on it an open structure. The RuvB hexamer acts as an ATP-dependent pump, pulling dsDNA into and through the RuvAB complex. RuvB forms 2 homohexamers on either side of HJ DNA bound by 1 or 2 RuvA tetramers; 4 subunits per hexamer contact DNA at a time. Coordinated motions by a converter formed by DNA-disengaged RuvB subunits stimulates ATP hydrolysis and nucleotide exchange. Immobilization of the converter enables RuvB to convert the ATP-contained energy into a lever motion, pulling 2 nucleotides of DNA out of the RuvA tetramer per ATP hydrolyzed, thus driving DNA branch migration. The RuvB motors rotate together with the DNA substrate, which together with the progressing nucleotide cycle form the mechanistic basis for DNA recombination by continuous HJ branch migration. Branch migration allows RuvC to scan DNA until it finds its consensus sequence, where it cleaves and resolves cruciform DNA. In Geobacter metallireducens (strain ATCC 53774 / DSM 7210 / GS-15), this protein is Holliday junction branch migration complex subunit RuvB.